We begin with the raw amino-acid sequence, 793 residues long: ClpA homolog protein (793 aa).

The segment at 1-24 (MRPRSNAGSSPPDPEEQEHAQVPS) is disordered. Residues 22-168 (VPSFSSTLEQ…NFIAHGVAKD (147 aa)) form the Clp R domain. Repeat stretches follow at residues 25-88 (FSST…IDDD) and 103-168 (PTAA…VAKD). The segment at 169-194 (PSYGESRPVQGADEPQETPKAEAGEA) is disordered. Residues 185 to 194 (ETPKAEAGEA) show a composition bias toward basic and acidic residues. Positions 199–447 (LSKYCVDLNI…AQHLVSDSKR (249 aa)) are i. ATP is bound by residues 244-251 (GDPGVGKT) and 525-532 (GPTGVGKT). The II stretch occupies residues 451-639 (LGTKEIEAVV…ILIMTSNVGA (189 aa)).

The protein belongs to the ClpA/ClpB family.

The chain is ClpA homolog protein from Fuscovulum blasticum (Rhodobacter blasticus).